The primary structure comprises 403 residues: Casein kinase I isoform delta-A (403 aa).

The 269-residue stretch at 9 to 277 (YRLGRKIGSG…YLRQLFRNLF (269 aa)) folds into the Protein kinase domain. ATP-binding positions include 15–23 (IGSGSFGDI) and lysine 38. Aspartate 128 (proton acceptor) is an active-site residue. The interval 315–340 (QGRIPLPRVMLPTSSGRPRGTQEVAP) is autoinhibitory. A disordered region spans residues 322–403 (RVMLPTSSGR…PSGLQSAVPR (82 aa)).

It belongs to the protein kinase superfamily. In terms of assembly, monomer. Interacts with per1 and per2. Component of the circadian core oscillator. Post-translationally, autophosphorylated on serine and threonine residues.

It is found in the cytoplasm. It localises to the nucleus. It catalyses the reaction L-seryl-[protein] + ATP = O-phospho-L-seryl-[protein] + ADP + H(+). It carries out the reaction L-threonyl-[protein] + ATP = O-phospho-L-threonyl-[protein] + ADP + H(+). Its activity is regulated as follows. Exhibits substrate-dependent heparin activation. Functionally, casein kinases are operationally defined by their preferential utilization of acidic proteins such as caseins as substrates. Central component of the circadian clock. May act as a negative regulator of circadian rhythmicity by phosphorylating per1 and per2, which may lead to their degradation. Participates in wnt signaling. The polypeptide is Casein kinase I isoform delta-A (csnk1da) (Danio rerio (Zebrafish)).